The chain runs to 480 residues: MGYSFDRASKDVVKKLQGRDLRPVECLSDATKFRLFHILQETPRSGWETEDIPVGFTLLDLLEPNFPVPEPEVSAPKPFIHVQSTDLEANLNVADIARGGVGYVGYGGYNIEVQSTSIPNPKLEILQNRKLLDKLPTFMKFCRMERKNLYVVTEAYEVSKDTMLTGLSSVNLLVKGFFKQLFKVRGKAGRSEKYSIPIPKGSVLAYKKQQLVIENNTCVILPSATKKKMTFPGTPKYASASEPTEIYRTELQGLWINDIEPIGRIQEPAHLDFKCLQYEVSEQTRLLPELSKDVQEVVLSSFLSMLYEGDRNVLHDLMKMLELSQLGHMDGPGGKILDELRKDSSNPCVDLKDLILYLLQALMVLSDSQLNLLARSVEMRLLPHQVELVTSILQPNFKYPWNIPFTVQPQLLAPLQGEGLAITYELLEECGLKMELNNPRSTWDLEAKMPLSALYGSLSFLQQLQKANSSFKPSLRPGYI.

Residues 1–226 (MGYSFDRASK…TCVILPSATK (226 aa)) are triggers pyroptosis.

It belongs to the gasdermin family. As to quaternary structure, homooligomer; homooligomeric ring-shaped pore complex containing 27-28 subunits when inserted in the membrane. Cleavage by CASP8 relieves autoinhibition by releasing the N-terminal moiety (Gasdermin-C3, N-terminal) that initiates pyroptosis. In terms of processing, palmitoylated.

Its subcellular location is the cytoplasm. The protein localises to the cytosol. It is found in the cell membrane. With respect to regulation, the full-length protein before cleavage is inactive: intramolecular interactions between N- and C-terminal domains mediate autoinhibition in the absence of activation signal. The intrinsic pyroptosis-inducing activity is carried by the released N-terminal moiety (Gasdermin-C3, N-terminal) following cleavage by caspase CASP8. Its function is as follows. This form constitutes the precursor of the pore-forming protein: upon cleavage, the released N-terminal moiety (Gasdermin-C3, N-terminal) binds to membranes and forms pores, triggering pyroptosis. Pore-forming protein that causes membrane permeabilization and pyroptosis. Produced by the cleavage of gasdermin-C3 by caspase CASP8 in response to death signals. After cleavage, moves to the plasma membrane where it strongly binds to membrane inner leaflet lipids. Homooligomerizes within the membrane and forms pores of 10-15 nanometers (nm) of inner diameter, triggering pyroptosis. The protein is Gasdermin-C3 of Mus musculus (Mouse).